The chain runs to 427 residues: Serine/arginine (SR)-type shuttling mRNA binding protein GBP2 (427 aa).

The disordered stretch occupies residues M1–L101. A compositionally biased stretch (basic and acidic residues) spans R22 to D32. A Phosphoserine modification is found at S24. Residues D35 to S44 show a composition bias toward low complexity. Residues D50–D60 are compositionally biased toward basic and acidic residues. RRM domains lie at N122–P198 and F219–F296. T130 carries the phosphothreonine modification. Positions K300–G317 are enriched in basic and acidic residues. Positions K300–E319 are disordered. An RRM 3 domain is found at C349–R426.

Methylated by HMT1.

The protein resides in the cytoplasm. Its subcellular location is the nucleus. It is found in the chromosome. It localises to the telomere. The protein localises to the P-body. The protein resides in the stress granule. Binds to intron-containing transcripts and is involved in quality control for the export of spliced mRNAs from the nucleus. Binds to pre-mRNAs until splicing is completed or until faulty mRNAs are degraded. On correctly spliced mRNAs, GBP2 and HRB1 recruit MEX67 to allow nuclear export. On faulty mRNAs, GBP2 and HRB1 associate with the TRAMP complex that guides those pre-mRNAs to the exosome for degradation. Binds single-stranded telomeric sequences of the type (TG[1-3])n in vitro. Influences the localization of RAP1 in the nuclei. Involved in modulating telomere length. In Saccharomyces cerevisiae (strain ATCC 204508 / S288c) (Baker's yeast), this protein is Serine/arginine (SR)-type shuttling mRNA binding protein GBP2.